The following is a 350-amino-acid chain: tRNA U34 carboxymethyltransferase (350 aa).

Carboxy-S-adenosyl-L-methionine contacts are provided by residues lysine 101, tryptophan 125, lysine 130, glycine 150, 172–174, 208–209, methionine 224, tyrosine 228, and arginine 343; these read DPS and LE.

The protein belongs to the class I-like SAM-binding methyltransferase superfamily. CmoB family. Homotetramer.

The catalysed reaction is carboxy-S-adenosyl-L-methionine + 5-hydroxyuridine(34) in tRNA = 5-carboxymethoxyuridine(34) in tRNA + S-adenosyl-L-homocysteine + H(+). Functionally, catalyzes carboxymethyl transfer from carboxy-S-adenosyl-L-methionine (Cx-SAM) to 5-hydroxyuridine (ho5U) to form 5-carboxymethoxyuridine (cmo5U) at position 34 in tRNAs. The protein is tRNA U34 carboxymethyltransferase of Psychrobacter arcticus (strain DSM 17307 / VKM B-2377 / 273-4).